We begin with the raw amino-acid sequence, 124 residues long: Probable glycine cleavage system H protein (124 aa).

The Lipoyl-binding domain maps to 25–106 (TATIGITDYA…PYGSWLVKMA (82 aa)). N6-lipoyllysine is present on Lys-66.

The protein belongs to the GcvH family. In terms of assembly, the glycine cleavage system is composed of four proteins: P, T, L and H. (R)-lipoate is required as a cofactor.

In terms of biological role, the glycine cleavage system catalyzes the degradation of glycine. The H protein shuttles the methylamine group of glycine from the P protein to the T protein. This is Probable glycine cleavage system H protein from Thermoplasma acidophilum (strain ATCC 25905 / DSM 1728 / JCM 9062 / NBRC 15155 / AMRC-C165).